Consider the following 137-residue polypeptide: MLQPKRTKFRKAFKGRIHGAAKGGFELNFGEFGLKAMEPERITARQIEAARRAMTRHMKRAGRVWIRIFPDVPVSKKPTEVRMGKGKGAPEFWAARVAPGRIMFELDGVPADLAREALRLAAAKLPIKTRFIQRIEE.

Belongs to the universal ribosomal protein uL16 family. In terms of assembly, part of the 50S ribosomal subunit.

Its function is as follows. Binds 23S rRNA and is also seen to make contacts with the A and possibly P site tRNAs. In Beijerinckia indica subsp. indica (strain ATCC 9039 / DSM 1715 / NCIMB 8712), this protein is Large ribosomal subunit protein uL16.